Here is a 369-residue protein sequence, read N- to C-terminus: MPVLHVDARPGSGPGGVSPPPSGAALARRPGLADTAPFLRACRREHPGTTPVWFMRQAGRVLPEYRALRAGVAMLDSCRDAEMITEITLQPVRRFRPDAAIFFSDIVVPLVAIGLDIDIVAGIGPVVAEPVRDAVGLAALRALEPDDVPYVADAVRFLLAELGSTPLIGFAGAPFTLASYLIEGGPSRDHARTKALMYSEPKLWHALLARLADITTAFLRVQVDAGVDALQLFDSWAGALDEADYRRYVAPHSARVLAAFAGEVPRIHFGVNTGELLAAMGQAGADVVGVDWRVPLDEAARRIGPGHAVQGNLDPTAVFAPEPVLAAKVRDVCARGAEAEGHVFNLGHGVLPQTDPGVLAHVADLVHGG.

Positions 1–26 are disordered; sequence MPVLHVDARPGSGPGGVSPPPSGAAL. Substrate-binding positions include 56–60, D105, Y180, S235, and H348; that span reads RQAGR.

Belongs to the uroporphyrinogen decarboxylase family. As to quaternary structure, homodimer.

It localises to the cytoplasm. The catalysed reaction is uroporphyrinogen III + 4 H(+) = coproporphyrinogen III + 4 CO2. Its pathway is porphyrin-containing compound metabolism; protoporphyrin-IX biosynthesis; coproporphyrinogen-III from 5-aminolevulinate: step 4/4. Its function is as follows. Catalyzes the decarboxylation of four acetate groups of uroporphyrinogen-III to yield coproporphyrinogen-III. This chain is Uroporphyrinogen decarboxylase, found in Frankia casuarinae (strain DSM 45818 / CECT 9043 / HFP020203 / CcI3).